Reading from the N-terminus, the 134-residue chain is Histone H2B (134 aa).

The segment covering 1–10 has biased composition (polar residues); sequence MSDKASTPKK. Disordered regions lie at residues 1-29 and 113-134; these read MSDKASTPKKSATKDATKPKKVGDEEAKK and VSEGQSAVKRAQGQPTSGSKSR. Residues 12–29 are compositionally biased toward basic and acidic residues; sequence ATKDATKPKKVGDEEAKK. Positions 125–134 are enriched in polar residues; that stretch reads GQPTSGSKSR.

Belongs to the histone H2B family. The nucleosome is a histone octamer containing two molecules each of H2A, H2B, H3 and H4 assembled in one H3-H4 heterotetramer and two H2A-H2B heterodimers. The octamer wraps approximately 147 bp of DNA.

It is found in the nucleus. Its subcellular location is the chromosome. Functionally, core component of nucleosome. Nucleosomes wrap and compact DNA into chromatin, limiting DNA accessibility to the cellular machineries which require DNA as a template. Histones thereby play a central role in transcription regulation, DNA repair, DNA replication and chromosomal stability. DNA accessibility is regulated via a complex set of post-translational modifications of histones, also called histone code, and nucleosome remodeling. The sequence is that of Histone H2B from Entamoeba invadens.